A 1157-amino-acid chain; its full sequence is Folliculin-interacting protein 1 (1157 aa).

The uDENN FNIP1/2-type domain maps to Phe-37 to Ile-467. Disordered regions lie at residues Pro-92–Tyr-120, Ser-616–Glu-665, Ser-769–Cys-796, and Val-904–Gly-955. The segment covering Asp-95–Ser-111 has biased composition (low complexity). Residues Ser-475–Gln-1083 enclose the cDENN FNIP1/2-type domain. Residues Ala-651–Val-664 show a composition bias toward basic and acidic residues. A compositionally biased stretch (basic and acidic residues) spans Val-904–Val-916. The region spanning Phe-1093–His-1148 is the dDENN FNIP1/2-type domain.

It belongs to the FNIP family. As to quaternary structure, homodimer and homomultimer. Heterodimer and heteromultimer with FNIP2. Component of the lysosomal folliculin complex (LFC).

Its subcellular location is the lysosome membrane. It localises to the cytoplasm. The protein resides in the cytosol. Binding partner of the GTPase-activating protein FLCN: involved in the cellular response to amino acid availability by regulating the non-canonical mTORC1 signaling cascade controlling the MiT/TFE factors TFEB and TFE3. Required to promote FLCN recruitment to lysosomes and interaction with Rag GTPases, leading to activation of the non-canonical mTORC1 signaling. In low-amino acid conditions, component of the lysosomal folliculin complex (LFC) on the membrane of lysosomes, which inhibits the GTPase-activating activity of FLCN, thereby inactivating mTORC1 and promoting nuclear translocation of TFEB and TFE3. Upon amino acid restimulation, disassembly of the LFC complex liberates the GTPase-activating activity of FLCN, leading to activation of mTORC1 and subsequent inactivation of TFEB and TFE3. In addition to its role in mTORC1 signaling, also acts as a co-chaperone of HSP90AA1/Hsp90: inhibits the ATPase activity of HSP90AA1/Hsp90, leading to activate both kinase and non-kinase client proteins of HSP90AA1/Hsp90. Acts as a scaffold to load client protein FLCN onto HSP90AA1/Hsp90. The protein is Folliculin-interacting protein 1 of Gallus gallus (Chicken).